Here is a 308-residue protein sequence, read N- to C-terminus: Taste receptor type 2 member 43 (308 aa).

Residue methionine 1 is a topological domain, extracellular. Residues 2–22 (ITFLPIIFSILVVVTFVIGNC) form a helical membrane-spanning segment. Over 23 to 46 (ANGFIALVNSTEWVKRQKISFADQ) the chain is Cytoplasmic. Residues 47-67 (ILTALAVSRVGLLWVLLLNWY) traverse the membrane as a helical segment. At 68–86 (ATVLNPAFYSVEVRTIVYN) the chain is on the extracellular side. The chain crosses the membrane as a helical span at residues 87 to 107 (LWAVINHFSNWLATSLSIFYL). Residues 108–126 (LKIANFSNLIFLHLKRRVK) lie on the Cytoplasmic side of the membrane. A helical transmembrane segment spans residues 127–147 (SVVLVILLGPLLFLVCHLFVV). Over 148–178 (NMNEIVRTKEYEGNMTWKSKLRSAMYLSNTT) the chain is Extracellular. N-linked (GlcNAc...) asparagine glycans are attached at residues asparagine 161 and asparagine 176. The helical transmembrane segment at 179 to 199 (VTILANLVPFILTLISFLLLI) threads the bilayer. Residues 200–229 (CSLCKHLKKMQLRDKGSQDPSTKVHIKALQ) are Cytoplasmic-facing. Residues 230–249 (TVISLLLCVIYFLSIMISSW) form a helical membrane-spanning segment. The Extracellular segment spans residues 250-258 (SLGRVENKA). The chain crosses the membrane as a helical span at residues 259 to 279 (VFMFCKAIRFSYPSAHAFILI). Over 280–308 (WGNKKLKQTLLSVLWNVRYCVKGQKLPSP) the chain is Cytoplasmic.

Belongs to the G-protein coupled receptor T2R family.

It localises to the membrane. The protein resides in the cell projection. Its subcellular location is the cilium membrane. In terms of biological role, gustducin-coupled receptor immplicated in the perception of bitter compounds in the oral cavity and the gastrointestinal tract. Signals through PLCB2 and the calcium-regulated cation channel TRPM5. Activated by the sulfonyl amide sweeteners saccharin and acesulfame K. In airway epithelial cells, binding of bitter compounds increases the intracellular calcium ion concentration and stimulates ciliary beat frequency. May act as chemosensory receptors in airway epithelial cells to detect and eliminate potential noxious agents from the airways. The protein is Taste receptor type 2 member 43 (TAS2R43) of Papio hamadryas (Hamadryas baboon).